The chain runs to 343 residues: tRNA N6-adenosine threonylcarbamoyltransferase (343 aa).

Histidine 116 and histidine 120 together coordinate Fe cation. Residues leucine 138–glycine 142, aspartate 172, glycine 185, aspartate 189, and asparagine 277 each bind substrate. Residue aspartate 305 participates in Fe cation binding.

This sequence belongs to the KAE1 / TsaD family. Fe(2+) is required as a cofactor.

It localises to the cytoplasm. It catalyses the reaction L-threonylcarbamoyladenylate + adenosine(37) in tRNA = N(6)-L-threonylcarbamoyladenosine(37) in tRNA + AMP + H(+). Functionally, required for the formation of a threonylcarbamoyl group on adenosine at position 37 (t(6)A37) in tRNAs that read codons beginning with adenine. Is involved in the transfer of the threonylcarbamoyl moiety of threonylcarbamoyl-AMP (TC-AMP) to the N6 group of A37, together with TsaE and TsaB. TsaD likely plays a direct catalytic role in this reaction. The polypeptide is tRNA N6-adenosine threonylcarbamoyltransferase (Mycobacterium ulcerans (strain Agy99)).